The primary structure comprises 315 residues: Heme oxygenase 2 (315 aa).

Over residues 1-12 (MSSEVETSEGVD) the composition is skewed to acidic residues. Residues 1-28 (MSSEVETSEGVDESEKNSMAPEKENHTK) form a disordered region. N-acetylserine is present on S2. Phosphoserine is present on S2. Topologically, residues 2-294 (SSEVETSEGV…TTVAVLRKPS (293 aa)) are cytoplasmic. The span at 13–28 (ESEKNSMAPEKENHTK) shows a compositional bias: basic and acidic residues. 4 residues coordinate heme b: H44, Y153, K198, and R202. 2 HRM repeats span residues 263–268 (KCPFYA) and 280–285 (NCPFQT). An S-nitrosocysteine mark is found at C264 and C281. A helical; Anchor for type IV membrane protein membrane pass occupies residues 295 to 315 (LQLILAASVALVAGLLAWYYM).

This sequence belongs to the heme oxygenase family. In terms of processing, a soluble form arises by proteolytic removal of the membrane anchor. Post-translationally, S-nitrosylated by BLVRB. In terms of tissue distribution, ubiquitous.

Its subcellular location is the microsome membrane. It localises to the endoplasmic reticulum membrane. The catalysed reaction is heme b + 3 reduced [NADPH--hemoprotein reductase] + 3 O2 = biliverdin IXalpha + CO + Fe(2+) + 3 oxidized [NADPH--hemoprotein reductase] + 3 H2O + H(+). Catalyzes the oxidative cleavage of heme at the alpha-methene bridge carbon, released as carbon monoxide (CO), to generate biliverdin IXalpha, while releasing the central heme iron chelate as ferrous iron. This is Heme oxygenase 2 (Hmox2) from Mus musculus (Mouse).